The primary structure comprises 42 residues: Photosystem I reaction center subunit IX (42 aa).

The chain crosses the membrane as a helical span at residues Y7–I27.

This sequence belongs to the PsaJ family.

It is found in the plastid. The protein localises to the chloroplast thylakoid membrane. May help in the organization of the PsaE and PsaF subunits. The sequence is that of Photosystem I reaction center subunit IX from Ostreococcus tauri.